A 288-amino-acid polypeptide reads, in one-letter code: Glucose-1-phosphate thymidylyltransferase (288 aa).

Gly-8 is a dTDP-alpha-D-glucose binding site. 9 residues coordinate dTTP: Gly-8, Gly-11, Thr-12, Arg-13, Lys-23, Gln-24, Gln-80, Gly-85, and Asp-108. Lys-23, Gln-24, Gln-80, Gly-85, Asp-108, Asn-109, Gly-143, Glu-158, Lys-159, Val-169, and Asp-222 together coordinate dTDP-alpha-D-glucose. Asp-108 contributes to the Mg(2+) binding site. Asp-222 contacts Mg(2+).

Belongs to the glucose-1-phosphate thymidylyltransferase family. It depends on Mg(2+) as a cofactor.

The enzyme catalyses dTTP + alpha-D-glucose 1-phosphate + H(+) = dTDP-alpha-D-glucose + diphosphate. It functions in the pathway carbohydrate biosynthesis; dTDP-L-rhamnose biosynthesis. In terms of biological role, catalyzes the conversion of glucose-1-phosphate and dTTP to dTDP-glucose and pyrophosphate. Involved in the biosynthesis of the dTDP-L-rhamnose which is a component of the critical linker, D-N-acetylglucosamine-L-rhamnose disaccharide, which connects the galactan region of arabinogalactan to peptidoglycan via a phosphodiester linkage. The sequence is that of Glucose-1-phosphate thymidylyltransferase (rmlA) from Mycobacterium tuberculosis (strain CDC 1551 / Oshkosh).